We begin with the raw amino-acid sequence, 544 residues long: Phosphoacetylglucosamine mutase (544 aa).

Ser66 (phosphoserine intermediate) is an active-site residue. Mg(2+) is bound by residues Ser66, Asp290, Asp292, and Asp294. Residues 387–389 (EAN), 512–516 (RASGT), and Arg521 contribute to the substrate site.

The protein belongs to the phosphohexose mutase family. Requires Mg(2+) as cofactor.

It catalyses the reaction N-acetyl-alpha-D-glucosamine 1-phosphate = N-acetyl-D-glucosamine 6-phosphate. It functions in the pathway nucleotide-sugar biosynthesis; UDP-N-acetyl-alpha-D-glucosamine biosynthesis; N-acetyl-alpha-D-glucosamine 1-phosphate from alpha-D-glucosamine 6-phosphate (route I): step 2/2. In terms of biological role, catalyzes the conversion of GlcNAc-6-P into GlcNAc-1-P during the synthesis of uridine diphosphate/UDP-GlcNAc, which is a biosynthetic precursor of chitin and also supplies the amino sugars for N-linked oligosaccharides of glycoproteins. The chain is Phosphoacetylglucosamine mutase from Candida albicans (Yeast).